We begin with the raw amino-acid sequence, 294 residues long: uncharacterized protein (294 aa).

The protein resides in the mitochondrion. This is an uncharacterized protein from Zea mays (Maize).